The chain runs to 446 residues: Tryptophan synthase beta chain 2 (446 aa).

Lysine 110 is subject to N6-(pyridoxal phosphate)lysine.

This sequence belongs to the TrpB family. As to quaternary structure, tetramer of two alpha and two beta chains. Requires pyridoxal 5'-phosphate as cofactor.

The enzyme catalyses (1S,2R)-1-C-(indol-3-yl)glycerol 3-phosphate + L-serine = D-glyceraldehyde 3-phosphate + L-tryptophan + H2O. The protein operates within amino-acid biosynthesis; L-tryptophan biosynthesis; L-tryptophan from chorismate: step 5/5. The beta subunit is responsible for the synthesis of L-tryptophan from indole and L-serine. The polypeptide is Tryptophan synthase beta chain 2 (trpB2) (Pyrococcus furiosus (strain ATCC 43587 / DSM 3638 / JCM 8422 / Vc1)).